Consider the following 1095-residue polypeptide: Solute carrier family 12 member 1 (1095 aa).

The Cytoplasmic segment spans residues methionine 1 to phenylalanine 173. The short motif at arginine 16 to valine 19 is the RFXV motif element. The segment at alanine 29 to glutamate 49 is disordered. Serine 57 and serine 87 each carry phosphoserine. Residues threonine 91, threonine 96, threonine 101, and threonine 114 each carry the phosphothreonine modification. Serine 116 is modified (phosphoserine). Residue serine 126 is modified to Phosphoserine; by AMPK. Residue serine 144 is modified to Phosphoserine. The helical transmembrane segment at glycine 174–isoleucine 194 threads the bilayer. Topologically, residues arginine 195–serine 197 are extracellular. Residues tryptophan 198–valine 218 form a helical membrane-spanning segment. The Cytoplasmic segment spans residues threonine 219 to serine 255. A helical membrane pass occupies residues isoleucine 256–alanine 276. Over glutamate 277–arginine 298 the chain is Extracellular. A helical membrane pass occupies residues isoleucine 299 to glutamate 319. Over alanine 320–glutamine 323 the chain is Cytoplasmic. A helical transmembrane segment spans residues valine 324 to proline 344. The Extracellular segment spans residues serine 345–glycine 375. The chain crosses the membrane as a helical span at residues phenylalanine 376–isoleucine 396. The Cytoplasmic portion of the chain corresponds to serine 397 to leucine 413. The helical transmembrane segment at alanine 414–valine 434 threads the bilayer. Over arginine 435 to leucine 546 the chain is Extracellular. Residues asparagine 442 and asparagine 452 are each glycosylated (N-linked (GlcNAc...) asparagine). 2 helical membrane passes run threonine 547 to isoleucine 567 and serine 568 to alanine 588. The Extracellular segment spans residues lysine 589 to serine 605. The helical transmembrane segment at leucine 606 to isoleucine 626 threads the bilayer. The Cytoplasmic portion of the chain corresponds to threonine 627–serine 1095.

The protein belongs to the SLC12A transporter family. As to quaternary structure, when phosphorylated, interacts with PPP3CB. In terms of processing, phosphorylated at Ser-87, Thr-96 and Thr-101 by OXSR1/OSR1 and STK39/SPAK downstream of WNK kinases (WNK1, WNK2, WNK3 or WNK4), promoting its activity. Short-term cyclosporine administration increases SLC12A1 phosphorylation in kidney thick ascending limb, possibly through the inhibition of PPP3CB/calcineurin A beta phosphatase. In terms of tissue distribution, predominantly expressed in kidney (at protein level). Kidney-specific; most highly expressed in the outer stripe of outer medulla (at protein level). As to expression, kidney-specific; most highly expressed in the cortical thick ascending limb (at protein level). In terms of tissue distribution, kidney-specific; most highly expressed in the inner stripe of outer medulla (at protein level).

The protein localises to the apical cell membrane. It catalyses the reaction K(+)(out) + 2 chloride(out) + Na(+)(out) = K(+)(in) + 2 chloride(in) + Na(+)(in). Its activity is regulated as follows. Activated following phosphorylation by OXSR1/OSR1 and STK39/SPAK downstream of WNK kinases (WNK1, WNK2, WNK3 or WNK4). With respect to regulation, inhibited by mercury dichloride and diuretic drug bumetaide. Inactive in isotonic conditions. Its function is as follows. Renal sodium, potassium and chloride ion cotransporter that mediates the transepithelial NaCl reabsorption in the thick ascending limb and plays an essential role in the urinary concentration and volume regulation. Electrically silent transporter system. Functionally, high affinity, high capacity cotransporter for sodium, potassium and chloride ions, with a coupling ratio 1Na(+):1K(+):2Cl(-). In terms of biological role, high affinity, low capacity cotransporter for sodium, potassium and chloride ions, with a coupling ratio 1Na(+):1K(+):2Cl(-). Low affinity, low capacity cotransporter for sodium, potassium and chloride ions, with a coupling ratio 1Na(+):1K(+):2Cl(-). The chain is Solute carrier family 12 member 1 (Slc12a1) from Mus musculus (Mouse).